The primary structure comprises 361 residues: Rhomboid domain-containing protein 2 (361 aa).

The next 5 membrane-spanning stretches (helical) occupy residues 19-39 (SATF…LFLL), 63-83 (LVTY…AIII), 100-120 (CFFT…FESV), 158-178 (FGVV…SWLI), and 182-202 (SFLS…TYCY). Disordered regions lie at residues 265–287 (PSYP…PPGH) and 318–361 (PASA…VAMP). 2 stretches are compositionally biased toward polar residues: residues 267 to 276 (YPVTQMQHAS) and 318 to 328 (PASAGTSQGVQ).

Belongs to the peptidase S54 family. As to quaternary structure, might form homotrimers; these trimers are only formed in retina. In terms of tissue distribution, widely expressed, including in retina and brain (at protein level), as well as in kidney, testis and ovary. Expressed in all layers of the retina, including inner segments of photoreceptor cells and ganglion cells (at protein level).

It is found in the golgi apparatus. Its subcellular location is the cis-Golgi network membrane. This is Rhomboid domain-containing protein 2 (Rhbdd2) from Mus musculus (Mouse).